Consider the following 287-residue polypeptide: CRISPR-associated endoribonuclease Cas6 1 (287 aa).

This sequence belongs to the CRISPR-associated endoribonuclease Cas6 family. As to quaternary structure, part of the aCascade ribonucleoprotein complex, minimally composed of Csa2 and Cas5a, which binds crRNA. Other possible components of aCascade in strain P1 are Cas6b (SSO1437) and Csa5 (SSO1443), while SSO1399, Cas5b (SSO1400) and SSO1401 have sometimes been seen weakly associated. Csa2 is probably the major RNA-binding subunit. The Csa2-Cas5a-crRNA complex also binds target DNA homologous to crRNA, probably forming an R-loop. Purified aCascade forms a filament about 6 nm in width.

Its function is as follows. CRISPR (clustered regularly interspaced short palindromic repeat) is an adaptive immune system that provides protection against mobile genetic elements (viruses, transposable elements and conjugative plasmids). CRISPR clusters contain spacers, sequences complementary to antecedent mobile elements, and target invading nucleic acids. CRISPR clusters are transcribed and processed into CRISPR RNA (crRNA). This Saccharolobus solfataricus (strain ATCC 35092 / DSM 1617 / JCM 11322 / P2) (Sulfolobus solfataricus) protein is CRISPR-associated endoribonuclease Cas6 1 (cas6a).